Reading from the N-terminus, the 828-residue chain is MKLSRRSFMKANAVAAAAAAAGLSVPGVARAVVGQQEAIKWDKAPCRFCGTGCGVLVGTQQGRVVACQGDPDAPVNRGLNCIKGYFLPKIMYGKDRLTQPLLRMKNGKYDKEGEFTPITWDQAFDVMEEKFKTALKEKGPESIGMFGSGQWTIWEGYAASKLFKAGFRSNNIDPNARHCMASAVVGFMRTFGMDEPMGCYDDIEQADAFVLWGANMAEMHPILWSRITNRRLSNQNVTVAVLSTYQHRSFELADNGIIFTPQSDLVILNYIANYIIQNNAINQDFFSKHVNLRKGATDIGYGLRPTHPLEKAAKNPGSDASEPMSFEDYKAFVAEYTLEKTAEMTGVPKDQLEQLAQLYADPNKKVISYWTMGFNQHTRGVWANNLVYNLHLLTGKISQPGCGPFSLTGQPSACGTAREVGTFAHRLPADMVVTNEKHRDICEKKWNIPSGTIPAKIGLHAVAQDRALKDGKLNVYWTMCTNNMQAGPNINEERMPGWRDPRNFIIVSDPYPTVSALAADLILPTAMWVEKEGAYGNAERRTQFWRQQVQAPGEAKSDLWQLVQFSRRFKTEEVWPEELLAKKPELRGKTLYEVLYATPEVSKFPVSELAEDQLNDESRELGFYLQKGLFEEYAWFGRGHGHDLAPFDDYHKARGLRWPVVNGKETQWRYSEGNDPYVKAGEGYKFYGKPDGKAVIFALPFEPAAEAPDEEYDLWLSTGRVLEHWHTGSMTRRVPELHRAFPEAVLFIHPLDAKARDLRRGDKVKVVSRRGEVISIVETRGRNRPPQGLVYMPFFDAAQLVNKLTLDATDPLSKETDFKKCAVKLEKV.

A signal peptide (tat-type signal) is located at residues 1–31; the sequence is MKLSRRSFMKANAVAAAAAAAGLSVPGVARA. One can recognise a 4Fe-4S Mo/W bis-MGD-type domain in the interval 39–95; it reads IKWDKAPCRFCGTGCGVLVGTQQGRVVACQGDPDAPVNRGLNCIKGYFLPKIMYGKD. 4 residues coordinate [4Fe-4S] cluster: C46, C49, C53, and C81. Mo-bis(molybdopterin guanine dinucleotide) is bound by residues K83, Q150, N175, C179, 212 to 219, 243 to 247, 262 to 264, M372, Q376, N482, 508 to 509, K531, D558, and 718 to 727; these read WGANMAEM, STYQH, QSD, SD, and TGRVLEHWHT. Residue F794 participates in substrate binding. Positions 802 and 819 each coordinate Mo-bis(molybdopterin guanine dinucleotide).

The protein belongs to the prokaryotic molybdopterin-containing oxidoreductase family. NasA/NapA/NarB subfamily. In terms of assembly, component of the periplasmic nitrate reductase NapAB complex composed of NapA and NapB. [4Fe-4S] cluster serves as cofactor. Requires Mo-bis(molybdopterin guanine dinucleotide) as cofactor. In terms of processing, predicted to be exported by the Tat system. The position of the signal peptide cleavage has not been experimentally proven.

It localises to the periplasm. It carries out the reaction 2 Fe(II)-[cytochrome] + nitrate + 2 H(+) = 2 Fe(III)-[cytochrome] + nitrite + H2O. Its function is as follows. Catalytic subunit of the periplasmic nitrate reductase complex NapAB. Receives electrons from NapB and catalyzes the reduction of nitrate to nitrite. The chain is Periplasmic nitrate reductase from Escherichia coli O9:H4 (strain HS).